The chain runs to 132 residues: Histone H2A.1 (132 aa).

Positions 1–21 (MSGGKGKAGTSEKASTSRSAK) are disordered. S2 bears the N-acetylserine mark. 2 positions are modified to N6-acetyllysine: K5 and K7. An N5-methylglutamine modification is found at Q105. The residue at position 129 (S129) is a Phosphoserine. Residues 129-130 (SQ) carry the [ST]-Q motif motif.

This sequence belongs to the histone H2A family. As to quaternary structure, the nucleosome is a histone octamer containing two molecules each of H2A, H2B, H3 and H4 assembled in one H3-H4 heterotetramer and two H2A-H2B heterodimers. The octamer wraps approximately 147 bp of DNA. Phosphorylated to form H2AS128ph (gamma-H2A) in response to DNA double-strand breaks (DSBs) generated by exogenous genotoxic agents and by stalled replication forks. Phosphorylation is dependent on the DNA damage checkpoint kinases MEC1/ATR and TEL1/ATM, spreads on either side of a detected DSB site and may mark the surrounding chromatin for recruitment of proteins required for DNA damage signaling and repair. Gamma-H2A is removed from the DNA prior to the strand invasion-primer extension step of the repair process and subsequently dephosphorylated. Dephosphorylation is necessary for efficient recovery from the DNA damage checkpoint. In terms of processing, acetylated by ESA1 to form H2AK4ac and H2AK7ac.

It is found in the nucleus. The protein localises to the chromosome. Its function is as follows. Core component of nucleosome which plays a central role in DNA double strand break (DSB) repair. Nucleosomes wrap and compact DNA into chromatin, limiting DNA accessibility to the cellular machineries which require DNA as a template. Histones thereby play a central role in transcription regulation, DNA repair, DNA replication and chromosomal stability. DNA accessibility is regulated via a complex set of post-translational modifications of histones, also called histone code, and nucleosome remodeling. In Candida albicans (strain SC5314 / ATCC MYA-2876) (Yeast), this protein is Histone H2A.1 (HTA1).